Reading from the N-terminus, the 242-residue chain is Carboxy-S-adenosyl-L-methionine synthase (242 aa).

Residues tyrosine 39, glycine 64–serine 66, aspartate 89–asparagine 90, aspartate 117–isoleucine 118, asparagine 132, and arginine 199 contribute to the S-adenosyl-L-methionine site.

It belongs to the class I-like SAM-binding methyltransferase superfamily. Cx-SAM synthase family. Homodimer.

The enzyme catalyses prephenate + S-adenosyl-L-methionine = carboxy-S-adenosyl-L-methionine + 3-phenylpyruvate + H2O. Catalyzes the conversion of S-adenosyl-L-methionine (SAM) to carboxy-S-adenosyl-L-methionine (Cx-SAM). The chain is Carboxy-S-adenosyl-L-methionine synthase from Aliivibrio fischeri (strain MJ11) (Vibrio fischeri).